The following is a 359-amino-acid chain: MRVLGIETSCDETAAAIVERDDMGEGRILSNVVLSQIAEHEPYGGVVPEIAARAHVEALDRLVDRALNDAGLKLYEVDAVAATAGPGLIGGLIVGLMTAKALAMAAQKPFYAVNHLEGHALTARLTDGLPFPYLLLLVSGGHTQMVLVRGIGDYERLGTTIDDALGEAFDKTAKLLGLPYPGGPAVERMALQGDQKRFALPRPLKGEARLDFSFSGLKTAVRQTATELVPLTDQDVTDICASFQAAVADTLSDRVGRSLERFKTEFPDCATPSLVVAGGVAANKTLRAALENLCTRHGFAFIAPPLNLCTDNAAMIAWAGAERAATQAPDSLDIAPRSRWPLDEKSAPVFGTGRRGAKA.

Residues histidine 115 and histidine 119 each coordinate Fe cation. Substrate-binding positions include 137-141 (LVSGG), aspartate 170, glycine 183, and asparagine 283. Aspartate 311 contacts Fe cation. A disordered region spans residues 328 to 359 (APDSLDIAPRSRWPLDEKSAPVFGTGRRGAKA).

It belongs to the KAE1 / TsaD family. It depends on Fe(2+) as a cofactor.

The protein localises to the cytoplasm. The catalysed reaction is L-threonylcarbamoyladenylate + adenosine(37) in tRNA = N(6)-L-threonylcarbamoyladenosine(37) in tRNA + AMP + H(+). Its function is as follows. Required for the formation of a threonylcarbamoyl group on adenosine at position 37 (t(6)A37) in tRNAs that read codons beginning with adenine. Is involved in the transfer of the threonylcarbamoyl moiety of threonylcarbamoyl-AMP (TC-AMP) to the N6 group of A37, together with TsaE and TsaB. TsaD likely plays a direct catalytic role in this reaction. The chain is tRNA N6-adenosine threonylcarbamoyltransferase from Brucella melitensis biotype 2 (strain ATCC 23457).